Reading from the N-terminus, the 65-residue chain is Photosystem II reaction center protein H (65 aa).

The chain crosses the membrane as a helical span at residues 27 to 47 (GAVPVMAFIGVLLLVFLVIML).

This sequence belongs to the PsbH family. In terms of assembly, PSII is composed of 1 copy each of membrane proteins PsbA, PsbB, PsbC, PsbD, PsbE, PsbF, PsbH, PsbI, PsbJ, PsbK, PsbL, PsbM, PsbT, PsbX, PsbY, Psb30/Ycf12, peripheral proteins PsbO, CyanoQ (PsbQ), PsbU, PsbV and a large number of cofactors. It forms dimeric complexes.

The protein localises to the cellular thylakoid membrane. One of the components of the core complex of photosystem II (PSII), required for its stability and/or assembly. PSII is a light-driven water:plastoquinone oxidoreductase that uses light energy to abstract electrons from H(2)O, generating O(2) and a proton gradient subsequently used for ATP formation. It consists of a core antenna complex that captures photons, and an electron transfer chain that converts photonic excitation into a charge separation. This Prochlorococcus marinus (strain NATL1A) protein is Photosystem II reaction center protein H.